The sequence spans 389 residues: Arrestin-C (389 aa).

This sequence belongs to the arrestin family. As to expression, retina and pineal gland.

Its function is as follows. May play a role in an as yet undefined retina-specific signal transduction. Could bind to photoactivated-phosphorylated red/green opsins. The protein is Arrestin-C (arr3) of Lithobates pipiens (Northern leopard frog).